We begin with the raw amino-acid sequence, 158 residues long: MTTVTLTSSDGVDITVDRDVAERSILIKNMLEDLGESDEAIPIPNVNEVVLKKVIEWCTHHKNDPPSTGDDDDSRRKTTDIDEWDQKFMQVDQEMLFEIILAANYLDIKALLDVGCKTVANMIKGKSPEEIRKTFNIQNDFTPEEEDQIRRENEWAEE.

The interaction with the F-box domain of F-box proteins stretch occupies residues 100-158 (ILAANYLDIKALLDVGCKTVANMIKGKSPEEIRKTFNIQNDFTPEEEDQIRRENEWAEE).

The protein belongs to the SKP1 family. In terms of assembly, component of the SCF (SKP1-CUL1-F-box protein) E3 ubiquitin ligase complexes.

Its pathway is protein modification; protein ubiquitination. Functionally, essential component of the SCF (SKP1-CUL1-F-box protein) E3 ubiquitin ligase complexes, which mediate the ubiquitination and subsequent proteasomal degradation of target proteins. Controls sulfur metabolite repression, probably by mediating the inactivation or degradation of the metR transcription factor. In Aspergillus fumigatus (strain CBS 144.89 / FGSC A1163 / CEA10) (Neosartorya fumigata), this protein is E3 ubiquitin ligase complex SCF subunit sconC (sconC).